We begin with the raw amino-acid sequence, 840 residues long: Lon protease homolog 2, peroxisomal (840 aa).

The 210-residue stretch at 13 to 222 (LPLLCTHDGV…KALPLLTRQI (210 aa)) folds into the Lon N-terminal domain. An ATP-binding site is contributed by 375–382 (GPPGVGKT). The segment at 583–606 (QKVSRSEAPTEQHAEQNTDSKVED) is disordered. Basic and acidic residues predominate over residues 584 to 606 (KVSRSEAPTEQHAEQNTDSKVED). The 185-residue stretch at 641–825 (LTLPGVAIGL…DEVLNAAFDG (185 aa)) folds into the Lon proteolytic domain. Active-site residues include Ser-731 and Lys-774. The Microbody targeting signal signature appears at 838–840 (SKL).

Belongs to the peptidase S16 family.

It localises to the peroxisome matrix. It carries out the reaction Hydrolysis of proteins in presence of ATP.. Its function is as follows. ATP-dependent serine protease that mediates the selective degradation of misfolded and unassembled polypeptides in the peroxisomal matrix. Necessary for type 2 peroxisome targeting signal (PTS2)-containing protein processing and facilitates peroxisome matrix protein import. The sequence is that of Lon protease homolog 2, peroxisomal (lonp2) from Danio rerio (Zebrafish).